Consider the following 363-residue polypeptide: Protein RecA (363 aa).

Residue 78 to 85 participates in ATP binding; it reads GPESGGKT.

Belongs to the RecA family.

The protein localises to the cytoplasm. Can catalyze the hydrolysis of ATP in the presence of single-stranded DNA, the ATP-dependent uptake of single-stranded DNA by duplex DNA, and the ATP-dependent hybridization of homologous single-stranded DNAs. It interacts with LexA causing its activation and leading to its autocatalytic cleavage. Probably involved in base excision repair. In terms of biological role, following severe irradiation (7 kGy of gamma irradiation) genomic DNA is fragmented. DNA is progressively degraded for the first 1.5 hours after IR, in a step promoted by RecA and counterbalanced by DNA Pol I and Pol III, followed by massive DNA synthesis and genome reassembly in the next hour. Optimal priming of DNA synthesis requires both RecA and RadA, Pol III initiates DNA synthesis while both Pol I and Pol III are required for its continuation. In the absence of RecA the majority of the chromosome is still reconstituted, via either single-strand annealing or non-homologous end joining. This chain is Protein RecA, found in Deinococcus radiodurans (strain ATCC 13939 / DSM 20539 / JCM 16871 / CCUG 27074 / LMG 4051 / NBRC 15346 / NCIMB 9279 / VKM B-1422 / R1).